A 238-amino-acid polypeptide reads, in one-letter code: Lactate utilization protein A (238 aa).

This sequence belongs to the LutA/YkgE family.

In terms of biological role, is involved in L-lactate degradation and allows cells to grow with lactate as the sole carbon source. The polypeptide is Lactate utilization protein A (Bacillus licheniformis (strain ATCC 14580 / DSM 13 / JCM 2505 / CCUG 7422 / NBRC 12200 / NCIMB 9375 / NCTC 10341 / NRRL NRS-1264 / Gibson 46)).